Here is a 1128-residue protein sequence, read N- to C-terminus: Lysylphosphatidylglycerol biosynthesis bifunctional protein LysX (1128 aa).

The segment at 1-47 is disordered; it reads MDNPPPTGVAPRHLPPGSVHTGKVTASLSHRRPDSVQDAPPAPVPHR. Residues 1–632 are phosphatidylglycerol lysyltransferase; the sequence is MDNPPPTGVA…GLHADGSPPD (632 aa). Helical transmembrane passes span 55-75, 97-117, 121-141, 147-167, 184-204, and 240-260; these read VPHIAGLVLGVFAVACLLWSL, APDTNVMWALIVGLLAGAIAS, IAWWLLVGYLTLFAVANGLRF, INALVAMIVQVGVVGLLIAAW, GVLVGGLAIGCLLGWGLVEVF, and FVNVLLGLFGAIALLAAVLTL. The interval 619 to 644 is disordered; the sequence is DTLTGLHADGSPPDWPKPDLLDSGPR. The interval 633 to 1128 is lysine--tRNA ligase; sequence WPKPDLLDSG…TLPFPLVKPR (496 aa). Residues 634 to 644 are compositionally biased toward basic and acidic residues; that stretch reads PKPDLLDSGPR. The Mg(2+) site is built by Asp1040 and Glu1047.

In the N-terminal section; belongs to the LPG synthetase family. It in the C-terminal section; belongs to the class-II aminoacyl-tRNA synthetase family. It depends on Mg(2+) as a cofactor.

It is found in the cell membrane. It catalyses the reaction tRNA(Lys) + L-lysine + ATP = L-lysyl-tRNA(Lys) + AMP + diphosphate. The catalysed reaction is L-lysyl-tRNA(Lys) + a 1,2-diacyl-sn-glycero-3-phospho-(1'-sn-glycerol) = a 1,2-diacyl-sn-glycero-3-phospho-1'-(3'-O-L-lysyl)-sn-glycerol + tRNA(Lys). Functionally, catalyzes the production of L-lysyl-tRNA(Lys)transfer and the transfer of a lysyl group from L-lysyl-tRNA(Lys) to membrane-bound phosphatidylglycerol (PG), which produces lysylphosphatidylglycerol (LPG), one of the components of the bacterial membrane with a positive net charge. LPG synthesis contributes to the resistance to cationic antimicrobial peptides (CAMPs) and likely protects M.tuberculosis against the CAMPs produced by competiting microorganisms (bacteriocins). In fact, the modification of anionic phosphatidylglycerol with positively charged L-lysine results in repulsion of the peptides. The polypeptide is Lysylphosphatidylglycerol biosynthesis bifunctional protein LysX (lysX) (Nocardia farcinica (strain IFM 10152)).